A 184-amino-acid polypeptide reads, in one-letter code: Threonylcarbamoyl-AMP synthase (184 aa).

Residues Met-1 to Gly-184 form the YrdC-like domain.

It belongs to the SUA5 family. TsaC subfamily.

Its subcellular location is the cytoplasm. The enzyme catalyses L-threonine + hydrogencarbonate + ATP = L-threonylcarbamoyladenylate + diphosphate + H2O. In terms of biological role, required for the formation of a threonylcarbamoyl group on adenosine at position 37 (t(6)A37) in tRNAs that read codons beginning with adenine. Catalyzes the conversion of L-threonine, HCO(3)(-)/CO(2) and ATP to give threonylcarbamoyl-AMP (TC-AMP) as the acyladenylate intermediate, with the release of diphosphate. The protein is Threonylcarbamoyl-AMP synthase of Haemophilus ducreyi (strain 35000HP / ATCC 700724).